The chain runs to 406 residues: Cysteine desulfurase (406 aa).

Residue Lys226 is modified to N6-(pyridoxal phosphate)lysine. The active-site Cysteine persulfide intermediate is the Cys364.

This sequence belongs to the class-V pyridoxal-phosphate-dependent aminotransferase family. Csd subfamily. In terms of assembly, homodimer. Interacts with SufE and the SufBCD complex composed of SufB, SufC and SufD. The interaction with SufE is required to mediate the direct transfer of the sulfur atom from the S-sulfanylcysteine. Requires pyridoxal 5'-phosphate as cofactor.

Its subcellular location is the cytoplasm. The enzyme catalyses (sulfur carrier)-H + L-cysteine = (sulfur carrier)-SH + L-alanine. It catalyses the reaction L-selenocysteine + AH2 = hydrogenselenide + L-alanine + A + H(+). It functions in the pathway cofactor biosynthesis; iron-sulfur cluster biosynthesis. Functionally, cysteine desulfurases mobilize the sulfur from L-cysteine to yield L-alanine, an essential step in sulfur metabolism for biosynthesis of a variety of sulfur-containing biomolecules. Component of the suf operon, which is activated and required under specific conditions such as oxidative stress and iron limitation. Acts as a potent selenocysteine lyase in vitro, that mobilizes selenium from L-selenocysteine. Selenocysteine lyase activity is however unsure in vivo. In Klebsiella pneumoniae (strain 342), this protein is Cysteine desulfurase.